A 280-amino-acid chain; its full sequence is Ribonuclease Z (280 aa).

The Zn(2+) site is built by histidine 61, histidine 63, aspartate 65, histidine 66, histidine 153, aspartate 176, and histidine 240. The Proton acceptor role is filled by aspartate 65.

Belongs to the RNase Z family. Homodimer. The cofactor is Zn(2+).

The enzyme catalyses Endonucleolytic cleavage of RNA, removing extra 3' nucleotides from tRNA precursor, generating 3' termini of tRNAs. A 3'-hydroxy group is left at the tRNA terminus and a 5'-phosphoryl group is left at the trailer molecule.. Zinc phosphodiesterase, which displays some tRNA 3'-processing endonuclease activity. Probably involved in tRNA maturation, by removing a 3'-trailer from precursor tRNA. This Mycobacterium avium (strain 104) protein is Ribonuclease Z.